Reading from the N-terminus, the 109-residue chain is Urocortin-2 (109 aa).

A signal peptide spans 1-22 (MTRWALVVFMVLMLDRVPGTPI). Positions 23–67 (PTFQLLPQNYPETTPSSVSSESPSDTTTGPSASWSNSKASPYLDT) are excised as a propeptide. The disordered stretch occupies residues 24–60 (TFQLLPQNYPETTPSSVSSESPSDTTTGPSASWSNSK). Residues 33 to 50 (PETTPSSVSSESPSDTTT) are compositionally biased toward low complexity. A compositionally biased stretch (polar residues) spans 51-60 (GPSASWSNSK). Residue V106 is modified to Valine amide; partial.

The protein belongs to the sauvagine/corticotropin-releasing factor/urotensin I family. In terms of assembly, binds with high affinity to CRF receptors 2-alpha and 2-beta. Glycosylated.

It is found in the secreted. In terms of biological role, suppresses food intake, delays gastric emptying and decreases heat-induced edema. Might represent an endogenous ligand for maintaining homeostasis after stress. In Rattus norvegicus (Rat), this protein is Urocortin-2 (Ucn2).